A 231-amino-acid polypeptide reads, in one-letter code: Glutathione-specific gamma-glutamylcyclotransferase (231 aa).

49–54 (IFGYGS) is a binding site for substrate. Residue E127 is the Proton acceptor of the active site.

Belongs to the gamma-glutamylcyclotransferase family. ChaC subfamily.

It carries out the reaction glutathione = L-cysteinylglycine + 5-oxo-L-proline. In terms of biological role, catalyzes the cleavage of glutathione into 5-oxo-L-proline and a Cys-Gly dipeptide. Acts specifically on glutathione, but not on other gamma-glutamyl peptides. The sequence is that of Glutathione-specific gamma-glutamylcyclotransferase from Escherichia coli (strain K12).